A 172-amino-acid polypeptide reads, in one-letter code: Transcriptional regulator TAC1 (172 aa).

The disordered stretch occupies residues 1–28 (MENIKNPKNADDCSDSISKNSHQGVDDS). Residues 15-28 (DSISKNSHQGVDDS) show a composition bias toward polar residues. The C2H2-type zinc finger occupies 35–57 (YVCSFCIRGFSNAQALGGHMNIH). The EAR-like (transcriptional repression) signature appears at 156 to 160 (LDLEL).

As to expression, preferentially expressed in roots and flowers. Slightly expressed in leaves and stems.

It is found in the nucleus. In terms of biological role, activation factor which mediates telomerase activity and potentiates responses to auxin through the regulation of BT2. Binds in vitro to the DNA sequence 5'-GACAGTGTTAC-3' of the BT2 promoter. The sequence is that of Transcriptional regulator TAC1 (TAC1) from Arabidopsis thaliana (Mouse-ear cress).